The primary structure comprises 357 residues: Histidinol-phosphate aminotransferase (357 aa).

Residue K212 is modified to N6-(pyridoxal phosphate)lysine.

Belongs to the class-II pyridoxal-phosphate-dependent aminotransferase family. Histidinol-phosphate aminotransferase subfamily. As to quaternary structure, homodimer. Pyridoxal 5'-phosphate is required as a cofactor.

It carries out the reaction L-histidinol phosphate + 2-oxoglutarate = 3-(imidazol-4-yl)-2-oxopropyl phosphate + L-glutamate. It functions in the pathway amino-acid biosynthesis; L-histidine biosynthesis; L-histidine from 5-phospho-alpha-D-ribose 1-diphosphate: step 7/9. The chain is Histidinol-phosphate aminotransferase from Pectobacterium carotovorum subsp. carotovorum (strain PC1).